We begin with the raw amino-acid sequence, 766 residues long: Subtilisin-like protease SBT4.15 (766 aa).

The signal sequence occupies residues M1–A23. A propeptide spans A24–H113 (activation peptide). The Inhibitor I9 domain occupies Y35–H113. The 485-residue stretch at S117–I601 folds into the Peptidase S8 domain. Catalysis depends on D144, which acts as the Charge relay system. The N-linked (GlcNAc...) asparagine glycan is linked to N175. Residue H210 is the Charge relay system of the active site. N233, N376, and N465 each carry an N-linked (GlcNAc...) asparagine glycan. In terms of domain architecture, PA spans M365–I460. S543 acts as the Charge relay system in catalysis. N624, N638, and N668 each carry an N-linked (GlcNAc...) asparagine glycan.

This sequence belongs to the peptidase S8 family. In terms of processing, the C-terminal propeptide is autocleaved.

Its subcellular location is the secreted. The polypeptide is Subtilisin-like protease SBT4.15 (Arabidopsis thaliana (Mouse-ear cress)).